We begin with the raw amino-acid sequence, 707 residues long: Bone morphogenetic protein 1 (707 aa).

The interval 57–90 (SGAATNISRPEKGRRTRKERRRSREKRASTSRPE) is disordered. N62 is a glycosylation site (N-linked (GlcNAc...) asparagine). Residues 68–81 (KGRRTRKERRRSRE) are compositionally biased toward basic residues. Residues 84-283 (ASTSRPERVW…AQARKLYKCP (200 aa)) enclose the Peptidase M12A domain. Residue N105 is glycosylated (N-linked (GlcNAc...) asparagine). Cystine bridges form between C126–C282, C146–C168, C148–C149, and C285–C311. Residue H176 participates in Zn(2+) binding. E177 is an active-site residue. Residues H180 and H186 each contribute to the Zn(2+) site. 2 CUB domains span residues 285-397 (CGET…YEAL) and 398-509 (CGGE…NYFK). 2 N-linked (GlcNAc...) asparagine glycosylation sites follow: N295 and N326. 8 disulfide bridges follow: C338–C360, C398–C424, C451–C473, C514–C526, C522–C535, C537–C550, C554–C580, and C607–C629. The EGF-like; calcium-binding domain maps to 510-551 (EVDECSRPNNGGCEQRCVNTLGSYKCACDPGYELGQDKKSCE). Positions 554–666 (CGGFLTKLNG…KGFQANFFSE (113 aa)) constitute a CUB 3 domain. N-linked (GlcNAc...) asparagine glycosylation occurs at N562. Positions 682-707 (RGQQNQAPKRVRPRMRLRTVKKTRPP) are disordered. A compositionally biased stretch (basic residues) spans 690–707 (KRVRPRMRLRTVKKTRPP).

Interacts with olfml3/ont1. The cofactor is Zn(2+). Proteolytically activated in the trans-Golgi network by furin-like/paired basic proprotein convertases, cleavage is not required for secretion.

The protein localises to the golgi apparatus. Its subcellular location is the trans-Golgi network. It localises to the secreted. It is found in the extracellular space. The protein resides in the extracellular matrix. In terms of biological role, metalloprotease involved in pattern formation in gastrula and later differentiation of developing organs. Able to cleave chordin (chrd), suggesting that it may act in dorsoventral patterning during early development by regulating the chordin (chrd) activity. The chain is Bone morphogenetic protein 1 (bmp1) from Xenopus laevis (African clawed frog).